Consider the following 535-residue polypeptide: Nuclear/nucleolar GTPase 2 (535 aa).

The interval 1-42 is disordered; that stretch reads MAKKKERAVNVSGKPRHSLDVNRANDKKGAGGGAGGGGGGRS. Over residues 17 to 29 the composition is skewed to basic and acidic residues; the sequence is HSLDVNRANDKKG. Residues 30 to 41 are compositionally biased toward gly residues; it reads AGGGAGGGGGGR. The 162-residue stretch at 213–374 folds into the CP-type G domain; that stretch reads WGELYKVIDS…LIDCPGVVYQ (162 aa). The G4 stretch occupies residues 261 to 264; the sequence is NKCD. The G5 stretch occupies residues 290–292; sequence SIN. Positions 323-330 are G1; it reads GYPNVGKS. The G2 stretch occupies residues 349–353; sequence GETKV. Residues 367-370 form a G3 region; that stretch reads DCPG. The disordered stretch occupies residues 464–495; the sequence is FFVPPPQQGEDSPSETAEPVDKSDEEGVSSDR.

Belongs to the TRAFAC class YlqF/YawG GTPase family. RsgA subfamily.

Its subcellular location is the nucleus. The protein resides in the nucleolus. Its function is as follows. GTPase involved in pre-60S ribosomal subunit maturation. The chain is Nuclear/nucleolar GTPase 2 from Oryza sativa subsp. indica (Rice).